A 567-amino-acid polypeptide reads, in one-letter code: Nucleolus and neural progenitor protein (567 aa).

Phosphoserine is present on S265. Residues 437–457 are disordered; it reads SKHHLRQRRSQNKFLRRQRKP. Residues 442-460 form a nuclear localization signal region; that stretch reads RQRRSQNKFLRRQRKPQRK.

The protein belongs to the nepro family.

The protein resides in the nucleus. It localises to the nucleolus. May play a role in cortex development as part of the Notch signaling pathway. Downstream of Notch may repress the expression of proneural genes and inhibit neuronal differentiation thereby maintaining neural progenitors. May also play a role in preimplentation embryo development. The sequence is that of Nucleolus and neural progenitor protein from Homo sapiens (Human).